We begin with the raw amino-acid sequence, 318 residues long: Phospho-N-acetylmuramoyl-pentapeptide-transferase (318 aa).

Helical transmembrane passes span 5 to 25 (LKPL…VLAF), 50 to 70 (PTMG…VLAP), 71 to 91 (PSPL…IGLV), 115 to 135 (VLLG…GSVI), 139 to 159 (VTGW…LLLV), 173 to 193 (GLAA…ALTL), 198 to 218 (LVTF…YNFH), 222 to 242 (VFMG…LAIM), 248 to 268 (VLPV…LQVV), and 298 to 318 (VLFF…LLTI).

It belongs to the glycosyltransferase 4 family. MraY subfamily. It depends on Mg(2+) as a cofactor.

It is found in the cell membrane. The enzyme catalyses UDP-N-acetyl-alpha-D-muramoyl-L-alanyl-gamma-D-glutamyl-meso-2,6-diaminopimeloyl-D-alanyl-D-alanine + di-trans,octa-cis-undecaprenyl phosphate = di-trans,octa-cis-undecaprenyl diphospho-N-acetyl-alpha-D-muramoyl-L-alanyl-D-glutamyl-meso-2,6-diaminopimeloyl-D-alanyl-D-alanine + UMP. The protein operates within cell wall biogenesis; peptidoglycan biosynthesis. In terms of biological role, catalyzes the initial step of the lipid cycle reactions in the biosynthesis of the cell wall peptidoglycan: transfers peptidoglycan precursor phospho-MurNAc-pentapeptide from UDP-MurNAc-pentapeptide onto the lipid carrier undecaprenyl phosphate, yielding undecaprenyl-pyrophosphoryl-MurNAc-pentapeptide, known as lipid I. The chain is Phospho-N-acetylmuramoyl-pentapeptide-transferase from Moorella thermoacetica (strain ATCC 39073 / JCM 9320).